A 142-amino-acid chain; its full sequence is Large ribosomal subunit protein uL13 (142 aa).

Belongs to the universal ribosomal protein uL13 family. As to quaternary structure, part of the 50S ribosomal subunit.

Its function is as follows. This protein is one of the early assembly proteins of the 50S ribosomal subunit, although it is not seen to bind rRNA by itself. It is important during the early stages of 50S assembly. This is Large ribosomal subunit protein uL13 from Leptothrix cholodnii (strain ATCC 51168 / LMG 8142 / SP-6) (Leptothrix discophora (strain SP-6)).